The chain runs to 376 residues: Putative F-box only protein 9 (376 aa).

Positions 1-44 (MSDLPPDLVEDILSRVPATSLKRLRFTCKQWNSLFKNRRFTEKH) constitute an F-box domain.

In Arabidopsis thaliana (Mouse-ear cress), this protein is Putative F-box only protein 9 (FBX9).